A 390-amino-acid polypeptide reads, in one-letter code: Succinate--CoA ligase [ADP-forming] subunit beta (390 aa).

The 237-residue stretch at 9–245 (KHLLKKYNIP…TTQEDEHETM (237 aa)) folds into the ATP-grasp domain. ATP contacts are provided by residues Lys46, 53–55 (GRG), Glu99, Ser102, and Glu107. Mg(2+) contacts are provided by Asn200 and Asp214. Residues Asn265 and 322-324 (GIV) contribute to the substrate site.

It belongs to the succinate/malate CoA ligase beta subunit family. In terms of assembly, heterotetramer of two alpha and two beta subunits. It depends on Mg(2+) as a cofactor.

The catalysed reaction is succinate + ATP + CoA = succinyl-CoA + ADP + phosphate. The enzyme catalyses GTP + succinate + CoA = succinyl-CoA + GDP + phosphate. It functions in the pathway carbohydrate metabolism; tricarboxylic acid cycle; succinate from succinyl-CoA (ligase route): step 1/1. Succinyl-CoA synthetase functions in the citric acid cycle (TCA), coupling the hydrolysis of succinyl-CoA to the synthesis of either ATP or GTP and thus represents the only step of substrate-level phosphorylation in the TCA. The beta subunit provides nucleotide specificity of the enzyme and binds the substrate succinate, while the binding sites for coenzyme A and phosphate are found in the alpha subunit. This chain is Succinate--CoA ligase [ADP-forming] subunit beta, found in Coxiella burnetii (strain CbuG_Q212) (Coxiella burnetii (strain Q212)).